We begin with the raw amino-acid sequence, 235 residues long: N-alpha-acetyltransferase 10 (235 aa).

N-acetylmethionine is present on M1. Residues 1–58 (MNIRNARPEDLMNMQHCNLLCLPENYQMKYYFYHGLSWPQLSYIAEDENGKIVGYVLA) are interaction with NAA15. Residues 1–152 (MNIRNARPED…DAYAMKRDLT (152 aa)) enclose the N-acetyltransferase domain. Residue K136 is modified to N6-acetyllysine; by autocatalysis. Residues 196 to 213 (EEKGLAAEDSGGDSKDLS) are compositionally biased toward basic and acidic residues. The segment at 196–235 (EEKGLAAEDSGGDSKDLSEVSETTESTDVKDSSEASDSAS) is disordered. Residue S205 is modified to Phosphoserine. S209 carries the phosphoserine; by IKKB modification. Residues S213 and S216 each carry the phosphoserine modification.

The protein belongs to the acetyltransferase family. ARD1 subfamily. As to quaternary structure, component of the N-terminal acetyltransferase A complex (also called the NatA complex) composed of NAA10 and NAA15. Interacts with NAA15. Component of the N-terminal acetyltransferase A (NatA)/HYPK complex at least composed of NAA10, NAA15 and HYPK, which has N-terminal acetyltransferase activity. In complex with NAA15, interacts with HYPK. Component of the N-terminal acetyltransferase E (NatE) complex at least composed of NAA10, NAA15 and NAA50. Within the complex interacts with NAA15; the interaction is required for binding to NAAT50. Interacts with NAAT50. The interaction of the NatA complex with NAA50 reduces the acetylation activity of the NatA complex. Component of the N-terminal acetyltransferase E (NatE)/HYPK complex at least composed of NAA10, NAA15, NAA50 and HYPK. In complex with NAA15, interacts with HYPK; the interaction with HYPK reduces the capacity of the NatA complex to interact with NAA50. Interacts with HIF1A (via its ODD domain); the interaction increases HIF1A protein stability during normoxia, an down-regulates it when induced by hypoxia. Interacts with the ribosome. Binds to MYLK. Interacts with NAA16. Interacts (via its C-terminal domain) with TSC2, leading to its acetylation. Interacts with IKBKB. Interacts with HSPA1A and HSPA1B leading to its acetylation. Post-translationally, cleaved by caspases during apoptosis. In terms of processing, phosphorylation by IKBKB/IKKB at Ser-209 destabilises NAA10 and promotes its proteasome-mediated degradation. Autoacetylated at Lys-136 which stimulates its catalytic activity. As to expression, ubiquitous.

The protein resides in the cytoplasm. The protein localises to the nucleus. The enzyme catalyses N-terminal glycyl-[protein] + acetyl-CoA = N-terminal N(alpha)-acetylglycyl-[protein] + CoA + H(+). The catalysed reaction is N-terminal L-alanyl-[protein] + acetyl-CoA = N-terminal N(alpha)-acetyl-L-alanyl-[protein] + CoA + H(+). It carries out the reaction N-terminal L-seryl-[protein] + acetyl-CoA = N-terminal N(alpha)-acetyl-L-seryl-[protein] + CoA + H(+). It catalyses the reaction N-terminal L-valyl-[protein] + acetyl-CoA = N-terminal N(alpha)-acetyl-L-valyl-[protein] + CoA + H(+). The enzyme catalyses N-terminal L-cysteinyl-[protein] + acetyl-CoA = N-terminal N(alpha)-acetyl-L-cysteinyl-[protein] + CoA + H(+). The catalysed reaction is N-terminal L-threonyl-[protein] + acetyl-CoA = N-terminal N(alpha)-acetyl-L-threonyl-[protein] + CoA + H(+). In terms of biological role, catalytic subunit of the N-terminal acetyltransferase A (NatA) complex which displays alpha (N-terminal) acetyltransferase activity. Acetylates amino termini that are devoid of initiator methionine. The alpha (N-terminal) acetyltransferase activity may be important for vascular, hematopoietic and neuronal growth and development. Without NAA15, displays epsilon (internal) acetyltransferase activity towards HIF1A, thereby promoting its degradation. Represses MYLK kinase activity by acetylation, and thus represses tumor cell migration. Acetylates, and stabilizes TSC2, thereby repressing mTOR activity and suppressing cancer development. Acetylates HSPA1A and HSPA1B at 'Lys-77' which enhances its chaperone activity and leads to preferential binding to co-chaperone HOPX. Acetylates HIST1H4A. Acts as a negative regulator of sister chromatid cohesion during mitosis. The polypeptide is N-alpha-acetyltransferase 10 (Naa10) (Mus musculus (Mouse)).